A 493-amino-acid polypeptide reads, in one-letter code: Aspartyl/glutamyl-tRNA(Asn/Gln) amidotransferase subunit B (493 aa).

The protein belongs to the GatB/GatE family. GatB subfamily. In terms of assembly, heterotrimer of A, B and C subunits.

It catalyses the reaction L-glutamyl-tRNA(Gln) + L-glutamine + ATP + H2O = L-glutaminyl-tRNA(Gln) + L-glutamate + ADP + phosphate + H(+). It carries out the reaction L-aspartyl-tRNA(Asn) + L-glutamine + ATP + H2O = L-asparaginyl-tRNA(Asn) + L-glutamate + ADP + phosphate + 2 H(+). In terms of biological role, allows the formation of correctly charged Asn-tRNA(Asn) or Gln-tRNA(Gln) through the transamidation of misacylated Asp-tRNA(Asn) or Glu-tRNA(Gln) in organisms which lack either or both of asparaginyl-tRNA or glutaminyl-tRNA synthetases. The reaction takes place in the presence of glutamine and ATP through an activated phospho-Asp-tRNA(Asn) or phospho-Glu-tRNA(Gln). This is Aspartyl/glutamyl-tRNA(Asn/Gln) amidotransferase subunit B from Aromatoleum aromaticum (strain DSM 19018 / LMG 30748 / EbN1) (Azoarcus sp. (strain EbN1)).